We begin with the raw amino-acid sequence, 243 residues long: Small ribosomal subunit protein eS4 (243 aa).

Residues 43–105 (IPLLYIVRDY…TGEHYRVLPN (63 aa)) enclose the S4 RNA-binding domain.

This sequence belongs to the eukaryotic ribosomal protein eS4 family. Part of the 30S ribosomal subunit.

This chain is Small ribosomal subunit protein eS4, found in Pyrococcus furiosus (strain ATCC 43587 / DSM 3638 / JCM 8422 / Vc1).